The chain runs to 618 residues: MRTLWRFIAGFFKWTWRLLNFVREMVLNLFFIFLVLVGVGIWMQVSGGDSKETASRGALLLDISGVIVDKPDSSQRFSKLSRQLLGASSDRLQENSLFDIVNTIRQAKDDRNITGIVMDLKNFAGGDQPSMQYIGKALKEFRDSGKPVYAVGENYSQGQYYLASFANKIWLSPQGVVDLHGFATNGLYYKSLLDKLKVSTHVFRVGTYKSAVEPFIRDDMSPAAREADSRWIGELWQNYLNTVAANRQIPAEQVFPGAQGLLEGLTKTGGDTAKYALENKLVDALASSAEIEKALTKEFGWSKTDKNYRAISYYDYALKTPADTGDSIGVVFANGAIMDGEETQGNVGGDTTAAQIRDARLDPKVKAIVLRVNSPGGSVTASEVIRAELAAARAAGKPVVVSMGGMAASGGYWISTPANYIVANPSTLTGSIGIFGVITTVENSLDSIGVHTDGVSTSPLADVSITRALPPEAQLMMQLSIENGYKRFITLVADARHSTPEQIDKIAQGHVWTGQDAKANGLVDSLGDFDDAVAKAAELAKVKQWHLEYYVDEPTFFDKVMDNMSGSVRAMLPDAFQAMLPAPLASVASTVKSESDKLAAFNDPQNRYAFCLTCANMR.

The Cytoplasmic segment spans residues 1 to 24 (MRTLWRFIAGFFKWTWRLLNFVRE). Residues 25–45 (MVLNLFFIFLVLVGVGIWMQV) form a helical membrane-spanning segment. The Periplasmic portion of the chain corresponds to 46–618 (SGGDSKETAS…AFCLTCANMR (573 aa)). Residue lysine 209 is the Proton donor/acceptor of the active site. Serine 409 (nucleophile) is an active-site residue.

Belongs to the peptidase S49 family. Homotetramer.

It is found in the cell inner membrane. Inhibited by serine hydrolase inhibitor FP-biotin and by antipain. In terms of biological role, digests cleaved signal peptides in vitro, its in vivo function is unknown. This activity is necessary to maintain proper secretion of mature proteins across the membrane. This is Protease 4 (sppA) from Escherichia coli (strain K12).